The following is a 313-amino-acid chain: Ribosomal RNA small subunit methyltransferase H (313 aa).

Residues 35–37, Asp55, Phe79, Asp101, and Gln108 each bind S-adenosyl-L-methionine; that span reads GGH.

Belongs to the methyltransferase superfamily. RsmH family.

The protein localises to the cytoplasm. It carries out the reaction cytidine(1402) in 16S rRNA + S-adenosyl-L-methionine = N(4)-methylcytidine(1402) in 16S rRNA + S-adenosyl-L-homocysteine + H(+). Functionally, specifically methylates the N4 position of cytidine in position 1402 (C1402) of 16S rRNA. This Shigella flexneri protein is Ribosomal RNA small subunit methyltransferase H.